We begin with the raw amino-acid sequence, 383 residues long: N-acetyldiaminopimelate deacetylase (383 aa).

Residue aspartate 75 is part of the active site. Glutamate 134 functions as the Proton acceptor in the catalytic mechanism.

It belongs to the peptidase M20A family. N-acetyldiaminopimelate deacetylase subfamily.

It carries out the reaction N-acetyl-(2S,6S)-2,6-diaminopimelate + H2O = (2S,6S)-2,6-diaminopimelate + acetate. It participates in amino-acid biosynthesis; L-lysine biosynthesis via DAP pathway; LL-2,6-diaminopimelate from (S)-tetrahydrodipicolinate (acetylase route): step 3/3. Its function is as follows. Catalyzes the conversion of N-acetyl-diaminopimelate to diaminopimelate and acetate. This is N-acetyldiaminopimelate deacetylase from Lactobacillus acidophilus (strain ATCC 700396 / NCK56 / N2 / NCFM).